The following is a 276-amino-acid chain: Bifunctional protein FolD 1 (276 aa).

NADP(+) contacts are provided by residues 161–163 (GRG), serine 186, and threonine 227.

This sequence belongs to the tetrahydrofolate dehydrogenase/cyclohydrolase family. Homodimer.

It carries out the reaction (6R)-5,10-methylene-5,6,7,8-tetrahydrofolate + NADP(+) = (6R)-5,10-methenyltetrahydrofolate + NADPH. It catalyses the reaction (6R)-5,10-methenyltetrahydrofolate + H2O = (6R)-10-formyltetrahydrofolate + H(+). It functions in the pathway one-carbon metabolism; tetrahydrofolate interconversion. In terms of biological role, catalyzes the oxidation of 5,10-methylenetetrahydrofolate to 5,10-methenyltetrahydrofolate and then the hydrolysis of 5,10-methenyltetrahydrofolate to 10-formyltetrahydrofolate. In Frankia casuarinae (strain DSM 45818 / CECT 9043 / HFP020203 / CcI3), this protein is Bifunctional protein FolD 1.